The chain runs to 227 residues: Cytochrome c biogenesis ATP-binding export protein CcmA (227 aa).

The ABC transporter domain occupies 26 to 227; the sequence is LAASGLGFSR…ARTLRLDARS (202 aa). ATP is bound at residue 58–65; sequence GANGSGKT.

It belongs to the ABC transporter superfamily. CcmA exporter (TC 3.A.1.107) family. The complex is composed of two ATP-binding proteins (CcmA) and two transmembrane proteins (CcmB).

It localises to the cell inner membrane. It carries out the reaction heme b(in) + ATP + H2O = heme b(out) + ADP + phosphate + H(+). In terms of biological role, part of the ABC transporter complex CcmAB involved in the biogenesis of c-type cytochromes; once thought to export heme, this seems not to be the case, but its exact role is uncertain. Responsible for energy coupling to the transport system. This Cupriavidus necator (strain ATCC 17699 / DSM 428 / KCTC 22496 / NCIMB 10442 / H16 / Stanier 337) (Ralstonia eutropha) protein is Cytochrome c biogenesis ATP-binding export protein CcmA.